The primary structure comprises 258 residues: MAVAVRVIPCLDVDAGRVVKGINFEGLRDAGDPVELAHRYDNGGADELTFLDVTASSGNRETTFDVVRRTAEEVFIPLTVGGGVRGVAEVDKLLRYGADKASINTAAVARPDVIDEITRHFGSQVLVLSVDARRTRPGSEPTASGFEVTTHGGRQGTGIDAIEWAREAADRGVGEILLNSIDADGTKDGFDIELIRLVRAAVRVPIIASGGAGKPEHFPPAVAAGADAVLAASIFHFGPVDMISQVKTAIREAGFEVR.

Catalysis depends on residues aspartate 12 and aspartate 131.

The protein belongs to the HisA/HisF family. Heterodimer of HisH and HisF.

The protein localises to the cytoplasm. The catalysed reaction is 5-[(5-phospho-1-deoxy-D-ribulos-1-ylimino)methylamino]-1-(5-phospho-beta-D-ribosyl)imidazole-4-carboxamide + L-glutamine = D-erythro-1-(imidazol-4-yl)glycerol 3-phosphate + 5-amino-1-(5-phospho-beta-D-ribosyl)imidazole-4-carboxamide + L-glutamate + H(+). Its pathway is amino-acid biosynthesis; L-histidine biosynthesis; L-histidine from 5-phospho-alpha-D-ribose 1-diphosphate: step 5/9. IGPS catalyzes the conversion of PRFAR and glutamine to IGP, AICAR and glutamate. The HisF subunit catalyzes the cyclization activity that produces IGP and AICAR from PRFAR using the ammonia provided by the HisH subunit. This chain is Imidazole glycerol phosphate synthase subunit HisF, found in Arthrobacter sp. (strain FB24).